We begin with the raw amino-acid sequence, 693 residues long: Glycine--tRNA ligase beta subunit (693 aa).

The segment covering Q65–G74 has biased composition (basic and acidic residues). Residues Q65–S84 form a disordered region.

This sequence belongs to the class-II aminoacyl-tRNA synthetase family. Tetramer of two alpha and two beta subunits.

The protein localises to the cytoplasm. The enzyme catalyses tRNA(Gly) + glycine + ATP = glycyl-tRNA(Gly) + AMP + diphosphate. In Marinobacter nauticus (strain ATCC 700491 / DSM 11845 / VT8) (Marinobacter aquaeolei), this protein is Glycine--tRNA ligase beta subunit.